Reading from the N-terminus, the 488-residue chain is ATP synthase subunit beta, chloroplastic (488 aa).

ATP is bound at residue 170 to 177 (GGAGVGKT).

It belongs to the ATPase alpha/beta chains family. F-type ATPases have 2 components, CF(1) - the catalytic core - and CF(0) - the membrane proton channel. CF(1) has five subunits: alpha(3), beta(3), gamma(1), delta(1), epsilon(1). CF(0) has four main subunits: a(1), b(1), b'(1) and c(9-12).

It is found in the plastid. The protein resides in the chloroplast thylakoid membrane. The catalysed reaction is ATP + H2O + 4 H(+)(in) = ADP + phosphate + 5 H(+)(out). Its function is as follows. Produces ATP from ADP in the presence of a proton gradient across the membrane. The catalytic sites are hosted primarily by the beta subunits. The sequence is that of ATP synthase subunit beta, chloroplastic from Picea abies (Norway spruce).